The sequence spans 85 residues: Small proline-rich protein 2D (85 aa).

A compositionally biased stretch (low complexity) spans 1–11 (MSYQQQQCKQP). The interval 1-20 (MSYQQQQCKQPCQPPPVCPP) is disordered. 4 repeat units span residues 21-29 (KKCPEPCPP), 30-38 (LKCPEPCPP), 39-47 (PKCPEPCPP), and 48-56 (PKCPEPCPE). The interval 21 to 56 (KKCPEPCPPLKCPEPCPPPKCPEPCPPPKCPEPCPE) is 4 X 9 AA approximate tandem repeats. A disordered region spans residues 57–85 (PCPPPSCQQKCPPAQPPPPCQQKCPPKSK).

This sequence belongs to the cornifin (SPRR) family. As to expression, expressed in uterus.

The protein localises to the cytoplasm. In terms of biological role, cross-linked envelope protein of keratinocytes. It is a keratinocyte protein that first appears in the cell cytosol, but ultimately becomes cross-linked to membrane proteins by transglutaminase. All that results in the formation of an insoluble envelope beneath the plasma membrane. The chain is Small proline-rich protein 2D (Sprr2d) from Mus musculus (Mouse).